The following is a 399-amino-acid chain: Coenzyme A biosynthesis bifunctional protein CoaBC (399 aa).

A phosphopantothenoylcysteine decarboxylase region spans residues 1-190 (MQSLAGKKIL…FAPKILVGKR (190 aa)). Cys-159 (proton donor) is an active-site residue. The interval 191-399 (VLITAGPTRE…AVMHLIHEQM (209 aa)) is phosphopantothenate--cysteine ligase. Residues Asp-279, Lys-289, 307–310 (PDIV), Phe-326, Lys-340, and Lys-344 contribute to the CTP site.

The protein in the N-terminal section; belongs to the HFCD (homo-oligomeric flavin containing Cys decarboxylase) superfamily. This sequence in the C-terminal section; belongs to the PPC synthetase family. Mg(2+) serves as cofactor. It depends on FMN as a cofactor.

It carries out the reaction N-[(R)-4-phosphopantothenoyl]-L-cysteine + H(+) = (R)-4'-phosphopantetheine + CO2. It catalyses the reaction (R)-4'-phosphopantothenate + L-cysteine + CTP = N-[(R)-4-phosphopantothenoyl]-L-cysteine + CMP + diphosphate + H(+). It functions in the pathway cofactor biosynthesis; coenzyme A biosynthesis; CoA from (R)-pantothenate: step 2/5. The protein operates within cofactor biosynthesis; coenzyme A biosynthesis; CoA from (R)-pantothenate: step 3/5. Catalyzes two sequential steps in the biosynthesis of coenzyme A. In the first step cysteine is conjugated to 4'-phosphopantothenate to form 4-phosphopantothenoylcysteine. In the second step the latter compound is decarboxylated to form 4'-phosphopantotheine. The protein is Coenzyme A biosynthesis bifunctional protein CoaBC of Vibrio cholerae serotype O1 (strain ATCC 39315 / El Tor Inaba N16961).